The primary structure comprises 1304 residues: DNA-directed RNA polymerase subunit beta' (1304 aa).

Zn(2+) contacts are provided by Cys60, Cys62, Cys75, and Cys78. Mg(2+) contacts are provided by Asp541, Asp543, and Asp545. Positions 887, 963, 970, and 973 each coordinate Zn(2+).

It belongs to the RNA polymerase beta' chain family. In terms of assembly, the RNAP catalytic core consists of 2 alpha, 1 beta, 1 beta' and 1 omega subunit. When a sigma factor is associated with the core the holoenzyme is formed, which can initiate transcription. The cofactor is Mg(2+). Requires Zn(2+) as cofactor.

It catalyses the reaction RNA(n) + a ribonucleoside 5'-triphosphate = RNA(n+1) + diphosphate. In terms of biological role, DNA-dependent RNA polymerase catalyzes the transcription of DNA into RNA using the four ribonucleoside triphosphates as substrates. This Acidothermus cellulolyticus (strain ATCC 43068 / DSM 8971 / 11B) protein is DNA-directed RNA polymerase subunit beta'.